A 468-amino-acid chain; its full sequence is Putative proline/betaine transporter (468 aa).

12 helical membrane-spanning segments follow: residues 20-42 (VFAT…YTTA), 63-83 (FAAL…FGII), 91-111 (VVLT…GVLP), 115-135 (MIGL…GFST), 164-184 (IGTL…SFFL), 191-211 (AWGW…GLYL), 246-266 (ILVC…VTAY), 284-304 (VLIT…GKLA), 312-332 (VFLI…SLLN), 336-356 (LPFI…YEAT), 376-396 (VTFN…NSWL), and 403-423 (IYAP…VIAV).

The protein belongs to the major facilitator superfamily. Metabolite:H+ Symporter (MHS) family (TC 2.A.1.6) family.

It localises to the cell membrane. Functionally, may be a proton symporter involved in the uptake of osmolytes such as proline and glycine betaine. In Staphylococcus haemolyticus (strain JCSC1435), this protein is Putative proline/betaine transporter (proP).